The chain runs to 1730 residues: MAASAKVTVGSHVWVEDPDDAWIDGEVEEVNSEEITVNCSGKTVVAKLNNVYPKDPEFPELGVDDMTKLAYLHEPGVLLNLKCRYNANEIYTYTGNILIAVNPFKRLPHLYGSETMKQYKGTAFGELSPHPFAVADSAYRKMINEGVSQAILVSGESGAGKTESTKMLMQYLAYMGGRAESEGRSVEQQVLESNPVLEAFGNAKTVRNNNSSRFGKFVEIQFDQRGRISGAAIRTYLLERSRVCQVSDPERNYHCFYMLCAAPEQETERYKLGKPSTFRYLNQSNCYALDGLDDSKEYLATRKAMDVVGINSEEQDGIFRVVAAILHLGNIEFAKGEESEASEPKDEKSRFHLKVAAELFMCDGKALEDSLCKRVMVTRDESITKSLDPDSAALGRDALAKIVYSKLFDWLVTKINNSIGQDPNSKHIIGVLDIYGFESFKTNSFEQFCINLTNEKLQQHFNQHVFKMEQEEYTKEEIDWSYIEFIDNQDVLDLIEKKPGGIIALLDEACMFPRSTHDTFAQKLYQTFKNHKRFGKPKLAQTDFTICHYAGDVTYQTELFLDKNKDYVVGEHQALLSSSDCSFVSSLFPPLPEESSKTSKFSSIGSQFKQQLQSLLESLSTTEPHYIRCVKPNNLLKPDIFENINILHQLRCGGVMEAIRISCAGYPTRKPFNEFLTRFRILAPETTKSSYDEVDACKKLLAKVDLKGFQIGKTKVFLRAGQMAEMDAHRAEVLGHSARIIQRNVLTYQSRKKFLLLQAASTEIQALCRGQVARVWFETMRREAASLRIQKQARTYICQNAYKTLCSSACSIQTGMRAKAARIELQLRKKRRATIIIQSQIRRCLCHQRYVRTKKAAITTQCGWRVKVARRELRNLKMAAKETGALQDAKTKLENQVEELTSNLELEKQMRMEIEEAKSQEIEALQSVLTDIKLQLRDTQETKSKEISDLQSVLTDIKLQLRDTQETKSKEISDLQSALQDMQLEIEELSKGLEMTNDLAAENEQLKESVSSLQNKIDESERKYEEISKISEERIKDEVPVIDQSAIIKLETENQKLKALVSSMEEKIDELDRKHDETSPNITEKLKEDVSFDYEIVSNLEAENERLKALVGSLEKKINESGNNSTDEQEEGKYILKEESLTEDASIDNERVKKLADENKDLNDLVSSLEKKIDETEKKYEEASRLCEERLKQALDAETGLIDLKTSMQRLEEKVSDMETAEQIRRQQALVNSASRRMSPQVSFTGAPPLENGHQEPLAPIPSRRFGTESFRRSRIERQPHEFVDVLLKCVSKNIGFSHGKPVAALTIYKCLMRWKIFEAEKTSIFDRIVPVFGSAIENQEDDNHLAYWLTNTSTLLFLLQRSLRQQSSTGSSPTKPPQPTSFFGRMTQGFRSTSSPNLSTDVVQQVDARYPALLFKQQLTAYVETMYGIIRENVKREVSSLLSSCIQSLKESSCDSSVVNSPSKSSEENLPAKSSEENSPKKSSEENSPKESSGDKSPQKLSDDNSPSKEGQAVKSSEENSPASSWQSIIEFLNYILITWKKNYVPLFLVQKMFSQTFQYINVQLFNSLLLEREYCTVNMGIKVKAGLDELESWCSQATEEFVGSSWDELKHTRQAVVLLVTEPKSTITYDDLTINLCSVLSTEQLYRICTLCKDKDDGDHNVSPEVISNLKLLLTNEDENSRSFLLDDDSSIPFDTDEISSCMQEKDFANVKSASELADNPNFLFLKE.

Positions 8 to 56 constitute a Myosin N-terminal SH3-like domain; sequence TVGSHVWVEDPDDAWIDGEVEEVNSEEITVNCSGKTVVAKLNNVYPKDP. The Myosin motor domain maps to 61 to 731; the sequence is LGVDDMTKLA…QMAEMDAHRA (671 aa). Residues 155 to 162 and 208 to 216 each bind ATP; these read GESGAGKT and NNNSSRFGK. Actin-binding regions lie at residues 494 to 528, 530 to 553, 588 to 612, and 612 to 634; these read LIEK…YQTF, NHKR…AGDV, FPPL…KQQL, and LQSL…KPNN. IQ domains lie at 757–786, 782–811, 831–850, and 853–882; these read LQAA…EAAS, REAA…SACS, RRAT…HQRY, and TKKA…AAKE. Positions 883–1224 form a coiled coil; sequence TGALQDAKTK…VSDMETAEQI (342 aa). In terms of domain architecture, Dilute spans 1327–1678; sequence DRIVPVFGSA…ISNLKLLLTN (352 aa). Disordered stretches follow at residues 1367-1387 and 1456-1520; these read QSST…FGRM and DSSV…SSEE. Over residues 1456 to 1465 the composition is skewed to low complexity; that stretch reads DSSVVNSPSK. Positions 1475 to 1508 are enriched in basic and acidic residues; that stretch reads SSEENSPKKSSEENSPKESSGDKSPQKLSDDNSP.

The protein belongs to the TRAFAC class myosin-kinesin ATPase superfamily. Myosin family. Plant myosin class XI subfamily. In terms of assembly, homodimer.

Its function is as follows. Myosin heavy chain that is required for the cell cycle-regulated transport of various organelles and proteins for their segregation. Functions by binding with its tail domain to receptor proteins on organelles and exerting force with its N-terminal motor domain against actin filaments, thereby transporting its cargo along polarized actin cables. The sequence is that of Myosin-7 (XI-A) from Arabidopsis thaliana (Mouse-ear cress).